Reading from the N-terminus, the 599-residue chain is Omega-hydroxyceramide transacylase (599 aa).

The region spanning 16 to 185 is the PNPLA domain; that stretch reads ISFSGSGFLS…TSMQPCSFWT (170 aa). The short motif at 51–55 is the GXSXG element; it reads GTSAG. The active-site Nucleophile is S53. D172 serves as the catalytic Proton acceptor. The DGA/G motif lies at 172-174; sequence DGG. The interval 289 to 563 is disordered; the sequence is PPPPSLQNLP…PASKLKSAPC (275 aa). Composition is skewed to polar residues over residues 325-335 and 350-362; these read SSAAPSVQTPE and VSISKQPSVSPLS. The span at 443–454 shows a compositional bias: low complexity; that stretch reads SPESPRLLLRSS. Over residues 468–478 the composition is skewed to pro residues; it reads PLSPSTPPAGP. Over residues 490–501 the composition is skewed to polar residues; the sequence is ATGSPALSQLTG. Low complexity predominate over residues 551-563; it reads SKKPASKLKSAPC.

As to expression, specifically expressed in skin by keratinocytes, at the boundary area between the nucleated stratum granulosum and the denucleated stratum corneum in the epidermis (at protein level). Also expressed in stomach and other surface lining tissues like intestine and tongue. Also detected in testis as well as in other tissues but at very low level.

It localises to the cytoplasm. It catalyses the reaction an N-(omega-hydroxy-ultra-long chain fatty acyl)-sphingoid base + a (9Z,12Z)-octadecadienoyl-containing triacyl-sn-glycerol = an N-[omega-(9Z,12Z-octadecadienoyloxy)-O-ultra-long chain fatty acyl]-sphingoid base + a diacylglycerol. It carries out the reaction an N-(omega-hydroxy-ultra-long chain fatty acyl)-sphing-4-enine + a (9Z,12Z)-octadecadienoyl-containing triacyl-sn-glycerol = an N-(omega-(9Z,12Z-octadecadienoyloxy)-ultra-long chain fatty acyl)-sphing-4-enine + a diacylglycerol. The enzyme catalyses N-(28-hydroxyoctacosanoyl)-sphing-4-enine + a (9Z,12Z)-octadecadienoyl-containing triacyl-sn-glycerol = N-(28-(9Z,12Z-octadecadienoyloxy)-octacosanoyl)-sphing-4-enine + a diacylglycerol. The catalysed reaction is N-(30-hydroxytriacontanoyl)-sphing-4-enine + 1,2,3-tri-(9Z,12Z)-octadecadienoylglycerol = N-[30-(9Z,12Z-octadecadienoyloxy)-triacontanoyl]-sphing-4-enine + di-(9Z,12Z)-octadecadienoylglycerol. It catalyses the reaction N-(32-hydroxydotriacontanoyl)-sphing-4-enine + a (9Z,12Z)-octadecadienoyl-containing triacyl-sn-glycerol = N-(32-(9Z,12Z-octadecadienoyloxy)-dotricontanoyl)-sphing-4-enine + a diacylglycerol. It carries out the reaction N-(32-hydroxydotriacontenoyl)-sphing-4-enine + a (9Z,12Z)-octadecadienoyl-containing triacyl-sn-glycerol = an N-(32-(9Z,12Z-octadecadienoyloxy)-dotriacontenoyl)-sphing-4-enine + a diacylglycerol. The enzyme catalyses an N-(34-hydroxytetratriacontenoyl)-sphing-4-enine + a (9Z,12Z)-octadecadienoyl-containing triacyl-sn-glycerol = an N-(34-(9Z,12Z-octadecadienoyloxy)-tetratriacontenoyl)-sphing-4-enine + a diacylglycerol. The catalysed reaction is an N-(34-hydroxytetratriacontadienoyl)-sphing-4-enine + a (9Z,12Z)-octadecadienoyl-containing triacyl-sn-glycerol = an N-(34-(9Z,12Z-octadecadienoyloxy)-tetratriacontadienoyl)-sphing-4-enine + a diacylglycerol. It catalyses the reaction an N-(36-hydroxyhexatriacontenoyl)-sphing-4-enine + a (9Z,12Z)-octadecadienoyl-containing triacyl-sn-glycerol = an N-(36-(9Z,12Z-octadecadienoyloxy)-hexatriacontenoyl)-sphing-4-enine + a diacylglycerol. It carries out the reaction an N-(36-hydroxyhexatriacontadienoyl)-sphing-4-enine + a (9Z,12Z)-octadecadienoyl-containing triacyl-sn-glycerol = an N-(36-(9Z,12Z-octadecadienoyloxy)-hexatriacontadienoyl)-sphing-4-enine + a diacylglycerol. The enzyme catalyses an N-(38-hydroxyoctatriacontenoyl)-sphing-4-enine + a (9Z,12Z)-octadecadienoyl-containing triacyl-sn-glycerol = an N-(38-(9Z,12Z-octadecadienoyloxy)-octatriacontenoyl)-sphing-4-enine + a diacylglycerol. Omega-hydroxyceramide transacylase involved in the synthesis of omega-O-acylceramides (esterified omega-hydroxyacyl-sphingosine; EOS), which are extremely hydrophobic lipids involved in skin barrier formation. Catalyzes the last step of the synthesis of omega-O-acylceramides by transferring linoleic acid from triglycerides to an omega-hydroxyceramide. Omega-O-acylceramides, are required for the biogenesis of lipid lamellae in the stratum corneum and the formation of the cornified lipid envelope which are essential for the epidermis barrier function. These lipids also play a role in keratinocyte differentiation. May also act on omega-hydroxylated ultra-long chain fatty acids (omega-OH ULCFA) and acylglucosylceramides (GlcEOS). The chain is Omega-hydroxyceramide transacylase from Mus musculus (Mouse).